Reading from the N-terminus, the 80-residue chain is Histone H1.M6.1 (80 aa).

Positions 1-80 are disordered; it reads MSDAAVPPKK…KAVKKAPKKK (80 aa). The span at 11-80 shows a compositional bias: basic residues; that stretch reads ASPKKAAAKK…KAVKKAPKKK (70 aa).

Its subcellular location is the nucleus. It is found in the chromosome. The polypeptide is Histone H1.M6.1 (Trypanosoma cruzi).